A 276-amino-acid polypeptide reads, in one-letter code: Exosome complex component Rrp42 (276 aa).

Belongs to the RNase PH family. Rrp42 subfamily. As to quaternary structure, component of the archaeal exosome complex. Forms a hexameric ring-like arrangement composed of 3 Rrp41-Rrp42 heterodimers. The hexameric ring associates with a trimer of Rrp4 and/or Csl4 subunits.

It is found in the cytoplasm. Functionally, non-catalytic component of the exosome, which is a complex involved in RNA degradation. Contributes to the structuring of the Rrp41 active site. In Aeropyrum pernix (strain ATCC 700893 / DSM 11879 / JCM 9820 / NBRC 100138 / K1), this protein is Exosome complex component Rrp42.